A 436-amino-acid chain; its full sequence is MSLPVVAVVGRPNVGKSHLFNRVIGEATAIVSDEAGTTRDRHFGEAEWAGRQFWLVDTGGLVEDSHLLMDTAIRRQVMQAIEEADLMLFVVDAKVGVHPSDARIVDILRNSQKPWMLVANKVDDPASTDFYEFFRLGVTDVYPVSAQNGKGSGDLLDAVVANIPEVEEEERDAVRVAVIGRPNVGKSSFVNRLLGEDRLVVSDESGTTRDAIDAPMRYHDTDLVFVDTAGLRRQSRIDDGVEFYSALRTRRAIDSSDVCILMIDATEGLQNQDLKIATMAWEAGRGLILVINKWDLYEDKTDKSADKFKKEAVEKVPYLKFVPFLFTSAISGQRVTKVLDIVLSVQEQRTRRISTSEVNDALGDLLARLQPPQAAGREVKLNYATQVEIEPPTIAVFGNNPEAIPEHYVRFLHNGFRERWGFTGAPLRIILRRKNS.

EngA-type G domains are found at residues 4-167 (PVVA…PEVE) and 174-350 (VRVA…EQRT). Residues 10-17 (GRPNVGKS), 57-61 (DTGGL), 120-123 (NKVD), 180-187 (GRPNVGKS), 227-231 (DTAGL), and 292-295 (NKWD) each bind GTP. Residues 351–435 (RRISTSEVND…PLRIILRRKN (85 aa)) form the KH-like domain.

The protein belongs to the TRAFAC class TrmE-Era-EngA-EngB-Septin-like GTPase superfamily. EngA (Der) GTPase family. In terms of assembly, associates with the 50S ribosomal subunit.

In terms of biological role, GTPase that plays an essential role in the late steps of ribosome biogenesis. This chain is GTPase Der, found in Gemmatimonas aurantiaca (strain DSM 14586 / JCM 11422 / NBRC 100505 / T-27).